Reading from the N-terminus, the 351-residue chain is Farnesyl pyrophosphate synthase (351 aa).

Isopentenyl diphosphate-binding residues include lysine 51, arginine 54, and glutamine 92. The Mg(2+) site is built by aspartate 99 and aspartate 103. Position 108 (arginine 108) interacts with dimethylallyl diphosphate. Arginine 109 contacts isopentenyl diphosphate. The dimethylallyl diphosphate site is built by lysine 196, threonine 197, glutamine 236, lysine 253, and lysine 262.

This sequence belongs to the FPP/GGPP synthase family. It depends on Mg(2+) as a cofactor.

The catalysed reaction is isopentenyl diphosphate + dimethylallyl diphosphate = (2E)-geranyl diphosphate + diphosphate. The enzyme catalyses isopentenyl diphosphate + (2E)-geranyl diphosphate = (2E,6E)-farnesyl diphosphate + diphosphate. It participates in isoprenoid biosynthesis; farnesyl diphosphate biosynthesis; farnesyl diphosphate from geranyl diphosphate and isopentenyl diphosphate: step 1/1. It functions in the pathway isoprenoid biosynthesis; geranyl diphosphate biosynthesis; geranyl diphosphate from dimethylallyl diphosphate and isopentenyl diphosphate: step 1/1. Farnesyl pyrophosphate synthase; part of the second module of ergosterol biosynthesis pathway that includes the middle steps of the pathway. ERG20 catalyzes the sequential condensation of isopentenyl pyrophosphate with dimethylallyl pyrophosphate, and then with the resultant geranylpyrophosphate to the ultimate product farnesyl pyrophosphate. The second module is carried out in the vacuole and involves the formation of farnesyl diphosphate, which is also an important intermediate in the biosynthesis of ubiquinone, dolichol, heme and prenylated proteins. Activity by the mevalonate kinase ERG12 first converts mevalonate into 5-phosphomevalonate. 5-phosphomevalonate is then further converted to 5-diphosphomevalonate by the phosphomevalonate kinase ERG8. The diphosphomevalonate decarboxylase MVD then produces isopentenyl diphosphate. The isopentenyl-diphosphate delta-isomerase IDI1 then catalyzes the 1,3-allylic rearrangement of the homoallylic substrate isopentenyl (IPP) to its highly electrophilic allylic isomer, dimethylallyl diphosphate (DMAPP). Finally the farnesyl diphosphate synthase ERG20 catalyzes the sequential condensation of isopentenyl pyrophosphate with dimethylallyl pyrophosphate, and then with the resultant geranylpyrophosphate to the ultimate product farnesyl pyrophosphate. In Candida albicans (strain SC5314 / ATCC MYA-2876) (Yeast), this protein is Farnesyl pyrophosphate synthase.